Here is a 707-residue protein sequence, read N- to C-terminus: E3 ubiquitin-protein ligase MARCHF7 (707 aa).

The residue at position 1 (M1) is an N-acetylmethionine. Disordered stretches follow at residues 1–126, 157–279, 294–343, 361–425, and 444–473; these read MESK…QVPR, LMDY…RRTT, FFSR…RASE, SHNH…HIFR, and AANR…GRNT. Low complexity predominate over residues 17 to 33; the sequence is SSSLSARMMSGSRGSSL. Residues 37-48 show a composition bias toward basic and acidic residues; sequence YHSRDSSFRLDS. Over residues 52–65 the composition is skewed to low complexity; the sequence is STSASASASPFQSA. 4 stretches are compositionally biased toward polar residues: residues 66–83, 95–126, 189–212, and 254–270; these read WYSE…SQNQ, SCTN…QVPR, NSMS…HQTI, and ISNS…FQES. Low complexity predominate over residues 294-303; the sequence is FFSRRSSQDS. Polar residues-rich tracts occupy residues 304–336, 373–392, and 412–421; these read LNTR…TSEV, FNQE…SLRN, and IPTSDTSSRS. S317 and S389 each carry phosphoserine. Positions 444–470 are enriched in low complexity; that stretch reads AANRPQASAASSSATTGGSTSDSAQGG. The segment at 544 to 614 adopts an RING-CH-type zinc-finger fold; sequence SEEEEGDLCR…ELCKEKLELN (71 aa). Residues C552, C555, C570, C572, H580, C583, C604, and C607 each coordinate Zn(2+). T686 carries the phosphothreonine modification. Phosphoserine is present on residues S687 and S691.

It is found in the cytoplasm. The enzyme catalyses S-ubiquitinyl-[E2 ubiquitin-conjugating enzyme]-L-cysteine + [acceptor protein]-L-lysine = [E2 ubiquitin-conjugating enzyme]-L-cysteine + N(6)-ubiquitinyl-[acceptor protein]-L-lysine.. It functions in the pathway protein modification; protein ubiquitination. In terms of biological role, E3 ubiquitin-protein ligase which may specifically enhance the E2 activity of HIP2. E3 ubiquitin ligases accept ubiquitin from an E2 ubiquitin-conjugating enzyme in the form of a thioester and then directly transfer the ubiquitin to targeted substrates. May be involved in T-cell proliferation by regulating LIF secretion. May play a role in lysosome homeostasis. Promotes 'Lys-6', 'Lys-11' and 'Lys-63'-linked mixed polyubiquitination on ATG14 leading to the inhibition of autophagy by impairing the interaction between ATG14 and STX7. Participates in the dopamine-mediated negative regulation of the NLRP3 inflammasome by promoting its uibiquitination and subsequent degradation. The sequence is that of E3 ubiquitin-protein ligase MARCHF7 (MARCHF7) from Pongo abelii (Sumatran orangutan).